Reading from the N-terminus, the 726-residue chain is Catalase-peroxidase (726 aa).

The disordered stretch occupies residues 1 to 33 (MSTTDDTHNTLSTGKCPFHQGGHDRSAGAGTAS). The tryptophyl-tyrosyl-methioninium (Trp-Tyr) (with M-252) cross-link spans 105 to 226 (WHGAGTYRSI…LGATEMGLIY (122 aa)). His106 serves as the catalytic Proton acceptor. A cross-link (tryptophyl-tyrosyl-methioninium (Tyr-Met) (with W-105)) is located at residues 226–252 (YVNPEGPDHSGEPLSAAAAIRATFGNM). His267 is a heme b binding site.

The protein belongs to the peroxidase family. Peroxidase/catalase subfamily. As to quaternary structure, homodimer or homotetramer. It depends on heme b as a cofactor. In terms of processing, formation of the three residue Trp-Tyr-Met cross-link is important for the catalase, but not the peroxidase activity of the enzyme.

It carries out the reaction H2O2 + AH2 = A + 2 H2O. It catalyses the reaction 2 H2O2 = O2 + 2 H2O. Bifunctional enzyme with both catalase and broad-spectrum peroxidase activity. This is Catalase-peroxidase from Salmonella paratyphi A (strain ATCC 9150 / SARB42).